We begin with the raw amino-acid sequence, 338 residues long: MTTLRLLISDSYDPWFNLAVEECIFRQMPATQRVLFLWRNADTVVIGRAQNPWKECNTRRMEEDNVRLARRSSGGGAVFHDLGNTCFTFMAGKPEYDKTISTHIVLAALNSLGVMADASGRNDLVVKTPDGDRKVSGSAYRETKDRGFHHGTLLLNADLSRLANYLNPDKKKLAAKGITSVRSRVANLTELLPGITHEQVCQAVTEAFFAHYGERIDAEVISPDKTPDLPNFTETFARQSSWEWNFGQAPAFSHLLDERFTWGGVELHFDVEKGVITRAQAFTDSLNPAPLEALAGRLQGCQYRADKLQETCEALIATFPEQESELRELANWVAGAVR.

The 188-residue stretch at 29–216 folds into the BPL/LPL catalytic domain; sequence PATQRVLFLW…AFFAHYGERI (188 aa). Residues Arg-71, 76-79, and Lys-134 contribute to the ATP site; that span reads GAVF. Residue Lys-134 participates in (R)-lipoate binding.

This sequence belongs to the LplA family. In terms of assembly, monomer.

It is found in the cytoplasm. It catalyses the reaction L-lysyl-[lipoyl-carrier protein] + (R)-lipoate + ATP = N(6)-[(R)-lipoyl]-L-lysyl-[lipoyl-carrier protein] + AMP + diphosphate + H(+). It participates in protein modification; protein lipoylation via exogenous pathway; protein N(6)-(lipoyl)lysine from lipoate: step 1/2. It functions in the pathway protein modification; protein lipoylation via exogenous pathway; protein N(6)-(lipoyl)lysine from lipoate: step 2/2. Its function is as follows. Catalyzes both the ATP-dependent activation of exogenously supplied lipoate to lipoyl-AMP and the transfer of the activated lipoyl onto the lipoyl domains of lipoate-dependent enzymes. This chain is Lipoate-protein ligase A, found in Salmonella typhi.